Consider the following 335-residue polypeptide: COP9 signalosome complex subunit 5 (335 aa).

The 137-residue stretch at 51–187 (VRISAVALLK…IGAFRTFPKD (137 aa)) folds into the MPN domain. Residues His-134, His-136, and Asp-147 each coordinate Zn(2+). Residues 134–147 (HSHPGYGCWLSGID) carry the JAMM motif motif.

The protein belongs to the peptidase M67A family. CSN5 subfamily. As to quaternary structure, component of the COP9 signalosome (CSN) complex.

Its subcellular location is the cytoplasm. The protein resides in the nucleus. Functionally, catalytic component of the COP9 signalosome (CSN) complex that acts as an regulator of the ubiquitin (Ubl) conjugation pathway by mediating the deneddylation of the cullin subunit of SCF-type E3 ubiquitin-protein ligase complexes. The CSN complex seems to link protein degradation to sexual development. Required for fruit body formation. The protein is COP9 signalosome complex subunit 5 (rri1) of Emericella nidulans (strain FGSC A4 / ATCC 38163 / CBS 112.46 / NRRL 194 / M139) (Aspergillus nidulans).